A 73-amino-acid polypeptide reads, in one-letter code: Dermaseptin-1 (73 aa).

An N-terminal signal peptide occupies residues methionine 1–cysteine 22. Residues glutamate 23 to methionine 43 constitute a propeptide, removed in mature form. Positions glutamate 25–glycine 46 are disordered. Over residues glutamate 30 to glutamine 40 the composition is skewed to acidic residues. Leucine 70 carries the post-translational modification Leucine amide. Residues glutamate 72–glutamine 73 constitute a propeptide, removed in mature form.

As to expression, expressed by the skin glands.

The protein localises to the secreted. Its function is as follows. Has antiparasitic activity against trypomastigote form of T.cruzi (IC(50)=0.68 uM) in vitro but not against L.infantum. Probably acts by permeabilizing cell membranes. In vitro, shows no cytotoxicity against macrophages. Has antibacterial activity. The polypeptide is Dermaseptin-1 (Pithecopus nordestinus (Northeastern Brazilian leaf frog)).